Consider the following 489-residue polypeptide: Adenylosuccinate synthetase 2, chloroplastic (489 aa).

The transit peptide at 1 to 54 directs the protein to the chloroplast; the sequence is MPLASLSLDPAPFPLIRPAAGWSGRVLPVPGPAPRLCRPLRAAPVAPATTDEPS. Residues 76–82 and 104–106 contribute to the GTP site; these read GDEGKGK and GHT. The active-site Proton acceptor is the Asp-77. Mg(2+)-binding residues include Asp-77 and Gly-104. Residues 77–80, 102–105, Thr-194, Arg-208, Gln-288, Thr-303, and Arg-367 contribute to the IMP site; these read DEGK and NAGH. His-105 (proton donor) is an active-site residue. 363–369 is a substrate binding site; sequence TTTGRPR. GTP-binding positions include Arg-369, 395 to 397, and 478 to 480; these read KLD and GVG.

It belongs to the adenylosuccinate synthetase family. As to quaternary structure, homodimer. The cofactor is Mg(2+).

It localises to the plastid. The protein resides in the chloroplast. The catalysed reaction is IMP + L-aspartate + GTP = N(6)-(1,2-dicarboxyethyl)-AMP + GDP + phosphate + 2 H(+). It functions in the pathway purine metabolism; AMP biosynthesis via de novo pathway; AMP from IMP: step 1/2. Plays an important role in the de novo pathway and in the salvage pathway of purine nucleotide biosynthesis. Catalyzes the first committed step in the biosynthesis of AMP from IMP. In Sorghum bicolor (Sorghum), this protein is Adenylosuccinate synthetase 2, chloroplastic.